Consider the following 514-residue polypeptide: Cobyric acid synthase (514 aa).

Positions 249–448 (LIDIAVIKLP…VHGVFDNDEI (200 aa)) constitute a GATase cobBQ-type domain. Cys330 serves as the catalytic Nucleophile. Residue His440 is part of the active site.

This sequence belongs to the CobB/CobQ family. CobQ subfamily.

The protein operates within cofactor biosynthesis; adenosylcobalamin biosynthesis. Its function is as follows. Catalyzes amidations at positions B, D, E, and G on adenosylcobyrinic A,C-diamide. NH(2) groups are provided by glutamine, and one molecule of ATP is hydrogenolyzed for each amidation. The protein is Cobyric acid synthase of Ruminiclostridium cellulolyticum (strain ATCC 35319 / DSM 5812 / JCM 6584 / H10) (Clostridium cellulolyticum).